A 139-amino-acid chain; its full sequence is Large ribosomal subunit protein bL20 (139 aa).

Belongs to the bacterial ribosomal protein bL20 family.

Its function is as follows. Binds directly to 23S ribosomal RNA and is necessary for the in vitro assembly process of the 50S ribosomal subunit. It is not involved in the protein synthesizing functions of that subunit. This chain is Large ribosomal subunit protein bL20, found in Leuconostoc mesenteroides subsp. mesenteroides (strain ATCC 8293 / DSM 20343 / BCRC 11652 / CCM 1803 / JCM 6124 / NCDO 523 / NBRC 100496 / NCIMB 8023 / NCTC 12954 / NRRL B-1118 / 37Y).